The following is a 241-amino-acid chain: Chloride intracellular channel protein 1 (241 aa).

N-acetylalanine is present on A2. Positions 2-90 (AEEQPQVELF…EEFLEAVLCP (89 aa)) are required for insertion into the membrane. N6-acetyllysine is present on K13. C24 serves as a coordination point for glutathione. S-glutathionyl cysteine; alternate is present on C24. The G-site motif lies at 24 to 27 (CPFS). C24 and C59 are joined by a disulfide. The chain crosses the membrane as a helical span at residues 26–46 (FSQRLFMVLWLKGVTFNVTTV). Glutathione contacts are provided by L64 and T77. A GST C-terminal domain is found at 93 to 233 (YPKLAALNPE…PDDEEIELAY (141 aa)). Residue K119 is modified to N6-acetyllysine. A Phosphoserine modification is found at S121. K131 bears the N6-acetyllysine mark. Phosphoserine occurs at positions 156 and 211. Position 233 is a phosphotyrosine (Y233).

It belongs to the chloride channel CLIC family. In terms of assembly, monomer. Homodimer (in vitro). Interacts with TRAPPC2. Dimerization requires a conformation change that leads to the exposure of a large hydrophobic surface. In vivo, this may lead to membrane insertion. Interacts with AKAP9. In terms of processing, hydrogen peroxide treatment causes a conformation change, leading to dimerization and formation of an intramolecular disulfide bond between Cys-24 and Cys-59. Expression is prominent in heart, placenta, liver, kidney and pancreas.

Its subcellular location is the nucleus. It localises to the nucleus membrane. It is found in the cytoplasm. The protein resides in the cell membrane. The protein localises to the endoplasmic reticulum. The catalysed reaction is L-dehydroascorbate + 2 glutathione = glutathione disulfide + L-ascorbate. It carries out the reaction chloride(in) = chloride(out). It catalyses the reaction iodide(out) = iodide(in). The enzyme catalyses thiocyanate(in) = thiocyanate(out). The catalysed reaction is nitrate(in) = nitrate(out). It carries out the reaction bromide(in) = bromide(out). It catalyses the reaction fluoride(in) = fluoride(out). With respect to regulation, the oxidoreductase activity is inhibited by rapamycin, amphotericin B and IAA-94. The channel conductance is regulated by pH and redox membrane potential. Inhibited by IAA-94. In the soluble state, catalyzes glutaredoxin-like thiol disulfide exchange reactions with reduced glutathione as electron donor. Reduces selenite and dehydroascorbate and may act as an antioxidant during oxidative stress response. Can insert into membranes and form voltage-dependent multi-ion conductive channels. Membrane insertion seems to be redox-regulated and may occur only under oxidizing conditions. Involved in regulation of the cell cycle. The polypeptide is Chloride intracellular channel protein 1 (Homo sapiens (Human)).